The primary structure comprises 307 residues: Olfactory receptor 8K5 (307 aa).

At 1 to 25 (MGQHNLTVLTEFILMELTRRPELQI) the chain is on the extracellular side. The N-linked (GlcNAc...) asparagine glycan is linked to Asn-5. A helical transmembrane segment spans residues 26–46 (PLFGVFLVIYLITVVGNLTMI). The Cytoplasmic segment spans residues 47–54 (ILTKLDSH). The chain crosses the membrane as a helical span at residues 55 to 75 (LHTPMYFSIRHLAFVDLGNST). The Extracellular portion of the chain corresponds to 76–99 (VICPKVLANFVVDRNTISYYACAA). A disulfide bridge links Cys-97 with Cys-189. A helical transmembrane segment spans residues 100–120 (QLAFFLMFIISEFFILSAMAY). Residues 121 to 139 (DRYVAICNPLLYYVIMSQR) lie on the Cytoplasmic side of the membrane. The chain crosses the membrane as a helical span at residues 140 to 160 (LCHVLVGIQYLYSTFQALMFT). Residues 161–197 (IKIFTLTFCGSNVISHFYCDDVPLLPMLCSNAQEIEL) lie on the Extracellular side of the membrane. Residues 198-217 (LSILFSVFNLISSFLIVLVS) form a helical membrane-spanning segment. Residues 218-237 (YMLILLAICQMHSAEGRKKA) are Cytoplasmic-facing. A helical transmembrane segment spans residues 238–258 (FSTCGSHLTVVVVFYGSLLFM). Residues 259-271 (YMQPNSTHFFDTD) lie on the Extracellular side of the membrane. The N-linked (GlcNAc...) asparagine glycan is linked to Asn-263. Residues 272-292 (KMASVFYTLVIPMLNPLIYSL) traverse the membrane as a helical segment. Over 293 to 307 (RNEEVKNAFYKLFEN) the chain is Cytoplasmic.

Belongs to the G-protein coupled receptor 1 family.

It localises to the cell membrane. Its function is as follows. Odorant receptor. The protein is Olfactory receptor 8K5 (OR8K5) of Homo sapiens (Human).